The sequence spans 602 residues: Probable translation initiation factor IF-2 (602 aa).

The 221-residue stretch at 9–229 (LRQPIVVVLG…GLTQNYMKNK (221 aa)) folds into the tr-type G domain. Residues 18–25 (GHVDHGKT) form a G1 region. 18–25 (GHVDHGKT) is a GTP binding site. The interval 43-47 (EMTQE) is G2. The interval 82-85 (DTPG) is G3. Residues 82–86 (DTPGH) and 136–139 (NKID) each bind GTP. The G4 stretch occupies residues 136 to 139 (NKID). Residues 204–206 (SAK) form a G5 region.

The protein belongs to the TRAFAC class translation factor GTPase superfamily. Classic translation factor GTPase family. IF-2 subfamily.

Its function is as follows. Function in general translation initiation by promoting the binding of the formylmethionine-tRNA to ribosomes. Seems to function along with eIF-2. The protein is Probable translation initiation factor IF-2 (infB) of Sulfolobus acidocaldarius (strain ATCC 33909 / DSM 639 / JCM 8929 / NBRC 15157 / NCIMB 11770).